Consider the following 540-residue polypeptide: 2,3-bisphosphoglycerate-independent phosphoglycerate mutase (540 aa).

Positions 13 and 63 each coordinate Mn(2+). The active-site Phosphoserine intermediate is Ser-63. Residues His-124, 154-155 (RD), Arg-186, Arg-192, 262-265 (RPDR), and Lys-356 each bind substrate. 5 residues coordinate Mn(2+): Asp-423, His-427, Asp-464, His-465, and His-483.

It belongs to the BPG-independent phosphoglycerate mutase family. As to quaternary structure, monomer. It depends on Mn(2+) as a cofactor.

The catalysed reaction is (2R)-2-phosphoglycerate = (2R)-3-phosphoglycerate. It functions in the pathway carbohydrate degradation; glycolysis; pyruvate from D-glyceraldehyde 3-phosphate: step 3/5. Catalyzes the interconversion of 2-phosphoglycerate and 3-phosphoglycerate. This chain is 2,3-bisphosphoglycerate-independent phosphoglycerate mutase, found in Chloroflexus aurantiacus (strain ATCC 29366 / DSM 635 / J-10-fl).